The sequence spans 378 residues: Transmembrane protein adipocyte-associated 1 homolog (378 aa).

N-linked (GlcNAc...) asparagine glycans are attached at residues Asn16, Asn25, and Asn36. 7 helical membrane-spanning segments follow: residues 61–81 (VMLLIPNVAFLVFLMWKLPSA), 88–108 (TSSPIFVAFYILVFVVAAVGI), 136–156 (FFLLAIELSVIILGLAFGHLE), 164–184 (VLAITAVLSLAYSITQGTLEI), 205–225 (HFWLASSCFFFLVYSLIVILP), 247–267 (ILALLNLVQGLGSALLCADII), and 278–298 (FLYFSVFAPLIYVTFLKGFFG). The disordered stretch occupies residues 316-335 (DSDVHLPHTSSSGLGRKDLD).

It belongs to the UPF0359 family.

The protein resides in the membrane. In Danio rerio (Zebrafish), this protein is Transmembrane protein adipocyte-associated 1 homolog (tpra1).